The chain runs to 476 residues: Aspartyl/glutamyl-tRNA(Asn/Gln) amidotransferase subunit B 1 (476 aa).

The protein belongs to the GatB/GatE family. GatB subfamily. As to quaternary structure, heterotrimer of A, B and C subunits.

It catalyses the reaction L-glutamyl-tRNA(Gln) + L-glutamine + ATP + H2O = L-glutaminyl-tRNA(Gln) + L-glutamate + ADP + phosphate + H(+). The enzyme catalyses L-aspartyl-tRNA(Asn) + L-glutamine + ATP + H2O = L-asparaginyl-tRNA(Asn) + L-glutamate + ADP + phosphate + 2 H(+). Its function is as follows. Allows the formation of correctly charged Asn-tRNA(Asn) or Gln-tRNA(Gln) through the transamidation of misacylated Asp-tRNA(Asn) or Glu-tRNA(Gln) in organisms which lack either or both of asparaginyl-tRNA or glutaminyl-tRNA synthetases. The reaction takes place in the presence of glutamine and ATP through an activated phospho-Asp-tRNA(Asn) or phospho-Glu-tRNA(Gln). The protein is Aspartyl/glutamyl-tRNA(Asn/Gln) amidotransferase subunit B 1 (gatB1) of Clostridium acetobutylicum (strain ATCC 824 / DSM 792 / JCM 1419 / IAM 19013 / LMG 5710 / NBRC 13948 / NRRL B-527 / VKM B-1787 / 2291 / W).